The following is a 274-amino-acid chain: Shikimate dehydrogenase (NADP(+)) (274 aa).

Residues 14–16 (SKS) and threonine 61 each bind shikimate. Lysine 65 (proton acceptor) is an active-site residue. Residue glutamate 77 participates in NADP(+) binding. Shikimate is bound by residues asparagine 86 and aspartate 102. NADP(+) is bound by residues 126–130 (GAGGA), 149–154 (NRTLEK), and methionine 212. Tyrosine 214 serves as a coordination point for shikimate. NADP(+) is bound at residue glycine 237.

Belongs to the shikimate dehydrogenase family. In terms of assembly, homodimer.

The enzyme catalyses shikimate + NADP(+) = 3-dehydroshikimate + NADPH + H(+). Its pathway is metabolic intermediate biosynthesis; chorismate biosynthesis; chorismate from D-erythrose 4-phosphate and phosphoenolpyruvate: step 4/7. Its function is as follows. Involved in the biosynthesis of the chorismate, which leads to the biosynthesis of aromatic amino acids. Catalyzes the reversible NADPH linked reduction of 3-dehydroshikimate (DHSA) to yield shikimate (SA). This is Shikimate dehydrogenase (NADP(+)) from Actinobacillus pleuropneumoniae serotype 5b (strain L20).